The primary structure comprises 362 residues: Ferredoxin--NADP reductase, leaf isozyme 1, chloroplastic (362 aa).

A chloroplast-targeting transit peptide spans 1-62 (MAAVTAAAVS…DAAAVAAAPA (62 aa)). An FAD-binding FR-type domain is found at 83–205 (KEPYVGKCLL…TGPVGKEMLM (123 aa)). FAD contacts are provided by residues 141–144 (RLYS), 162–164 (CVK), Tyr-168, 179–181 (VCS), and Thr-220. NADP(+)-binding residues include Ser-144 and Lys-164. Residues Cys-180 and Cys-185 are joined by a disulfide bond. Residue Ser-181 is modified to Phosphoserine. Residues Thr-220, 252–253 (VP), 282–283 (SR), Lys-292, 321–322 (GL), and Glu-360 contribute to the NADP(+) site.

It belongs to the ferredoxin--NADP reductase type 1 family. In terms of assembly, component of high molecular weight thylakoid LFNRs-containing protein complexes containing LIR1, LFNR1, LFNR2, TIC62 and TROL proteins. Interacts directly with LIR1 and TIC62; LIR1 increases the affinity of LFNR1 and LFNR2 for TIC62. The cofactor is FAD. In terms of processing, may form interchain disulfide bonds with LIR1.

It is found in the plastid. It localises to the chloroplast stroma. The protein localises to the chloroplast thylakoid membrane. The enzyme catalyses 2 reduced [2Fe-2S]-[ferredoxin] + NADP(+) + H(+) = 2 oxidized [2Fe-2S]-[ferredoxin] + NADPH. It functions in the pathway energy metabolism; photosynthesis. Its function is as follows. May play a key role in regulating the relative amounts of cyclic and non-cyclic electron flow to meet the demands of the plant for ATP and reducing power. This Oryza sativa subsp. japonica (Rice) protein is Ferredoxin--NADP reductase, leaf isozyme 1, chloroplastic.